Here is an 810-residue protein sequence, read N- to C-terminus: MEHKEVVLLLLLFLKSGQGEPLDDYVNTQGASLFSVTKKQLRAGSIEECAAKCEEEKEFTCRAFQYHSKEQQCVIMAENRKSSIIIRMRDVVLFEKKVYLSECKTGNGKNYRGTMSKTKNGITCQKWSSTSPHRPRFSPATHPSEGLEENYCRNPDNDAQGPWCYTTDPEHRYDYCDIPECEEACMHCSGENYDGKISKTMSGLECQAWDSQSPHAHGYIPSKFPNKNLKKNYCRNPDGEPRPWCFTTDPNKRWELCDIPRCTTPPPSSGPTYQCLKGTGENYRGNVAVTVSGHTCQRWSAQTPQTHNRTPENFPCKNLDENYCRNPDGEKAPWCYTTNSQVRWEYCKIPSCGSSPVSTEQLDPTAPPELTPVVQDCYHGDGQSYRGTSSTTTTGKKCQSWSSMTPHWHQKTPENYPDAGLTMNYCRNPDADKGPWCFTTDPSVRWEYCNLKKCSGTEGSVVAPPPVVQLPNVETPSEEDCMFGNGKGYRGKRATTVTGTPCQEWAAQEPHRHSIFTPQTNPRAGLEKNYCRNPDGDEGGPWCYTTNPRKHYDYCDVPQCASSSFDCGKPQVEPKKCPGRVVGGCVANAHSWPWQVSLRTRFGTHFCGGTLISPEWVLTAAHCLEKSPRPSSYKVILGAHQEVNLEPHVQEIEVSRLFLEPTRADIALLKLSSPAVITDKVIPACLPSPNYVVAGRTECFITGWGETQGTFGAGLLKEAQLPVIENKVCNRYEFLNGRVKSTELCAGHLAGGTDSCQGDSGGPLVCFEKDKYILQGVTSWGLGCARPNKPGVYVRVSRFVTWIEGVMRNN.

The N-terminal stretch at 1–19 (MEHKEVVLLLLLFLKSGQG) is a signal peptide. Positions 20–98 (EPLDDYVNTQ…RDVVLFEKKV (79 aa)) constitute a PAN domain. Intrachain disulfides connect Cys-49/Cys-73, Cys-53/Cys-61, Cys-103/Cys-181, Cys-124/Cys-164, Cys-152/Cys-176, Cys-185/Cys-262, Cys-188/Cys-316, Cys-206/Cys-245, Cys-234/Cys-257, Cys-275/Cys-352, Cys-296/Cys-335, and Cys-324/Cys-347. Kringle domains are found at residues 103-181 (CKTG…IPEC), 184-262 (ACMH…IPRC), and 275-352 (CLKG…IPSC). The interval 126-145 (KWSSTSPHRPRFSPATHPSE) is disordered. L-lysine contacts are provided by Arg-136, Asp-158, and Arg-172. The O-linked (GalNAc...) threonine glycan is linked to Thr-365. 9 disulfide bridges follow: Cys-377–Cys-454, Cys-398–Cys-437, Cys-426–Cys-449, Cys-481–Cys-560, Cys-502–Cys-543, Cys-531–Cys-555, Cys-567–Cys-685, Cys-577–Cys-585, and Cys-607–Cys-623. Kringle domains follow at residues 377 to 454 (CYHG…LKKC) and 481 to 560 (CMFG…VPQC). Asp-432 and Arg-445 together coordinate L-lysine. One can recognise a Peptidase S1 domain in the interval 581-808 (VVGGCVANAH…FVTWIEGVMR (228 aa)). Ser-597 is modified (phosphoserine). Active-site charge relay system residues include His-622 and Asp-665. Ser-688 carries the post-translational modification Phosphoserine. 3 cysteine pairs are disulfide-bonded: Cys-699/Cys-766, Cys-729/Cys-745, and Cys-756/Cys-784. Catalysis depends on Ser-760, which acts as the Charge relay system.

This sequence belongs to the peptidase S1 family. Plasminogen subfamily. In terms of assembly, interacts with CSPG4 and AMOT. Interacts (via the Kringle domains) with HRG; the interaction tethers PLG to the cell surface and enhances its activation. Interacts (via Kringle 4 domain) with ADA; the interaction stimulates PLG activation when in complex with DPP4. Angiostatin: Interacts with ATP5F1A; the interaction inhibits most of the angiogenic effects of angiostatin. In terms of processing, in the presence of the inhibitor, the activation involves only cleavage after Arg-580, yielding two chains held together by two disulfide bonds. In the absence of the inhibitor, the activation involves additionally the removal of the activation peptide.

The protein localises to the secreted. The catalysed reaction is Preferential cleavage: Lys-|-Xaa &gt; Arg-|-Xaa, higher selectivity than trypsin. Converts fibrin into soluble products.. With respect to regulation, converted into plasmin by plasminogen activators, both plasminogen and its activator being bound to fibrin. Activated with catalytic amounts of streptokinase. Plasmin dissolves the fibrin of blood clots and acts as a proteolytic factor in a variety of other processes including embryonic development, tissue remodeling, tumor invasion, and inflammation. In ovulation, weakens the walls of the Graafian follicle. It activates the urokinase-type plasminogen activator, collagenases and several complement zymogens, such as C1, C4 and C5. Cleavage of fibronectin and laminin leads to cell detachment and apoptosis. Also cleaves fibrin, thrombospondin and von Willebrand factor. Its role in tissue remodeling and tumor invasion may be modulated by CSPG4. Binds to cells. The chain is Plasminogen (PLG) from Pongo abelii (Sumatran orangutan).